The primary structure comprises 215 residues: Negative modulator of initiation of replication (215 aa).

Residues 71–93 (AETPKPSSEQEIRTPARKQSTQS) form a disordered region. An interaction with DNA region spans residues 181–187 (NTNSGRK).

Belongs to the SeqA family. Homodimer. Polymerizes to form helical filaments.

The protein localises to the cytoplasm. Its function is as follows. Negative regulator of replication initiation, which contributes to regulation of DNA replication and ensures that replication initiation occurs exactly once per chromosome per cell cycle. Binds to pairs of hemimethylated GATC sequences in the oriC region, thus preventing assembly of replication proteins and re-initiation at newly replicated origins. Repression is relieved when the region becomes fully methylated. This Mannheimia succiniciproducens (strain KCTC 0769BP / MBEL55E) protein is Negative modulator of initiation of replication.